The primary structure comprises 309 residues: uncharacterized protein (309 aa).

Basic residues predominate over residues 1–16 (MAGNSRRRGAVRKAGT). The interval 1-70 (MAGNSRRRGA…AKRTEETETV (70 aa)) is disordered. S-adenosyl-L-methionine contacts are provided by G261, I281, and L290.

This sequence belongs to the class IV-like SAM-binding methyltransferase superfamily. RNA methyltransferase TrmH family.

This is an uncharacterized protein from Mycobacterium avium (strain 104).